Consider the following 444-residue polypeptide: Phosphoglucosamine mutase (444 aa).

The active-site Phosphoserine intermediate is serine 102. Positions 102, 241, 243, and 245 each coordinate Mg(2+). Residue serine 102 is modified to Phosphoserine.

It belongs to the phosphohexose mutase family. Mg(2+) is required as a cofactor. Post-translationally, activated by phosphorylation.

The enzyme catalyses alpha-D-glucosamine 1-phosphate = D-glucosamine 6-phosphate. Functionally, catalyzes the conversion of glucosamine-6-phosphate to glucosamine-1-phosphate. In Actinobacillus pleuropneumoniae serotype 7 (strain AP76), this protein is Phosphoglucosamine mutase.